Here is a 268-residue protein sequence, read N- to C-terminus: Diaminopimelate epimerase (268 aa).

Residues asparagine 13, glutamine 46, and asparagine 64 each coordinate substrate. The Proton donor role is filled by cysteine 73. Residues 74–75, asparagine 148, asparagine 181, and 199–200 each bind substrate; these read GN and ER. Residue cysteine 208 is the Proton acceptor of the active site. 209 to 210 lines the substrate pocket; it reads GT.

The protein belongs to the diaminopimelate epimerase family. In terms of assembly, homodimer.

The protein resides in the cytoplasm. The catalysed reaction is (2S,6S)-2,6-diaminopimelate = meso-2,6-diaminopimelate. It functions in the pathway amino-acid biosynthesis; L-lysine biosynthesis via DAP pathway; DL-2,6-diaminopimelate from LL-2,6-diaminopimelate: step 1/1. In terms of biological role, catalyzes the stereoinversion of LL-2,6-diaminopimelate (L,L-DAP) to meso-diaminopimelate (meso-DAP), a precursor of L-lysine and an essential component of the bacterial peptidoglycan. The polypeptide is Diaminopimelate epimerase (Sphingopyxis alaskensis (strain DSM 13593 / LMG 18877 / RB2256) (Sphingomonas alaskensis)).